The sequence spans 132 residues: Small ribosomal subunit protein uS8 (132 aa).

This sequence belongs to the universal ribosomal protein uS8 family. In terms of assembly, part of the 30S ribosomal subunit. Contacts proteins S5 and S12.

Functionally, one of the primary rRNA binding proteins, it binds directly to 16S rRNA central domain where it helps coordinate assembly of the platform of the 30S subunit. The sequence is that of Small ribosomal subunit protein uS8 from Rhodococcus erythropolis (strain PR4 / NBRC 100887).